The following is a 186-amino-acid chain: Ribosome-recycling factor (186 aa).

It belongs to the RRF family.

It is found in the cytoplasm. Functionally, responsible for the release of ribosomes from messenger RNA at the termination of protein biosynthesis. May increase the efficiency of translation by recycling ribosomes from one round of translation to another. This is Ribosome-recycling factor from Chelativorans sp. (strain BNC1).